The primary structure comprises 142 residues: Multiprotein-bridging factor 1a (142 aa).

A compositionally biased stretch (polar residues) spans 51–64; that stretch reads GTNKAASSGTSLNT. Positions 51 to 77 are disordered; that stretch reads GTNKAASSGTSLNTKMLDDDTENLTHE. The HTH cro/C1-type domain maps to 87-141; that stretch reads IMQARTDKKLTQSQLAQIINEKPQVIQEYESGKAIPNQQILSKLERALGAKLRGK. The segment at residues 98-117 is a DNA-binding region (H-T-H motif); that stretch reads QSQLAQIINEKPQVIQEYES.

It belongs to the MBF1 family. In terms of tissue distribution, expressed in leaves, roots, stems, flowers, siliques and shoots. Detected only in anthers and some seeds in siliques.

It is found in the nucleus. Its subcellular location is the nucleolus. Its function is as follows. Transcriptional coactivator that stimulates transcriptional activity by bridging regulatory proteins and TBP, thereby recruiting TBP to promoters occupied by DNA-binding regulators. This chain is Multiprotein-bridging factor 1a (MBF1A), found in Arabidopsis thaliana (Mouse-ear cress).